We begin with the raw amino-acid sequence, 307 residues long: UDP-3-O-acyl-N-acetylglucosamine deacetylase (307 aa).

3 residues coordinate Zn(2+): His-78, His-241, and Asp-245. His-268 functions as the Proton donor in the catalytic mechanism.

The protein belongs to the LpxC family. The cofactor is Zn(2+).

It catalyses the reaction a UDP-3-O-[(3R)-3-hydroxyacyl]-N-acetyl-alpha-D-glucosamine + H2O = a UDP-3-O-[(3R)-3-hydroxyacyl]-alpha-D-glucosamine + acetate. The protein operates within glycolipid biosynthesis; lipid IV(A) biosynthesis; lipid IV(A) from (3R)-3-hydroxytetradecanoyl-[acyl-carrier-protein] and UDP-N-acetyl-alpha-D-glucosamine: step 2/6. Its function is as follows. Catalyzes the hydrolysis of UDP-3-O-myristoyl-N-acetylglucosamine to form UDP-3-O-myristoylglucosamine and acetate, the committed step in lipid A biosynthesis. The polypeptide is UDP-3-O-acyl-N-acetylglucosamine deacetylase (Bordetella bronchiseptica (strain ATCC BAA-588 / NCTC 13252 / RB50) (Alcaligenes bronchisepticus)).